A 208-amino-acid chain; its full sequence is Uracil phosphoribosyltransferase (208 aa).

Residues Arg-78, Arg-103, and 130–138 (DPMLATGGT) each bind 5-phospho-alpha-D-ribose 1-diphosphate. Uracil is bound by residues Ile-193 and 198 to 200 (GDA). Residue Asp-199 coordinates 5-phospho-alpha-D-ribose 1-diphosphate.

It belongs to the UPRTase family. It depends on Mg(2+) as a cofactor.

The catalysed reaction is UMP + diphosphate = 5-phospho-alpha-D-ribose 1-diphosphate + uracil. The protein operates within pyrimidine metabolism; UMP biosynthesis via salvage pathway; UMP from uracil: step 1/1. With respect to regulation, allosterically activated by GTP. Its function is as follows. Catalyzes the conversion of uracil and 5-phospho-alpha-D-ribose 1-diphosphate (PRPP) to UMP and diphosphate. The sequence is that of Uracil phosphoribosyltransferase from Desulforapulum autotrophicum (strain ATCC 43914 / DSM 3382 / VKM B-1955 / HRM2) (Desulfobacterium autotrophicum).